Reading from the N-terminus, the 153-residue chain is MEKLDKLSEAFKALLKQEKFSSQSEIVTALQELGFENINQSKVSRMLSKFGAVRTRNTKMEMVYQLPAELGVPTTSSPLKNLVVDIDHNDVLIVVKTSPGAAQLIARLLDSMGKSEGILGTIAGDDTIFITPTKVTPVEVLMQNVTELFESSF.

Belongs to the ArgR family.

It localises to the cytoplasm. Its pathway is amino-acid biosynthesis; L-arginine biosynthesis [regulation]. Regulates arginine biosynthesis genes. This Actinobacillus pleuropneumoniae serotype 5b (strain L20) protein is Arginine repressor.